We begin with the raw amino-acid sequence, 194 residues long: Adenylate kinase (194 aa).

Position 11–16 (11–16) interacts with ATP; that stretch reads GSGKGT. An NMP region spans residues 31–60; that stretch reads STGELLRAEIKAQTELGQAAAGYINEGHLV. Residues threonine 32, arginine 37, 58–60, 86–89, and glutamine 93 each bind AMP; these read HLV and GFPR. The segment at 127–137 is LID; that stretch reads NRGKVSGRSDD. Residue arginine 128 participates in ATP binding. Residues arginine 134 and arginine 145 each contribute to the AMP site. Glycine 173 serves as a coordination point for ATP.

It belongs to the adenylate kinase family. Monomer.

It is found in the cytoplasm. It catalyses the reaction AMP + ATP = 2 ADP. The protein operates within purine metabolism; AMP biosynthesis via salvage pathway; AMP from ADP: step 1/1. Functionally, catalyzes the reversible transfer of the terminal phosphate group between ATP and AMP. Plays an important role in cellular energy homeostasis and in adenine nucleotide metabolism. The sequence is that of Adenylate kinase from Porphyromonas gingivalis (strain ATCC BAA-308 / W83).